The chain runs to 753 residues: 5-methyltetrahydropteroyltriglutamate--homocysteine methyltransferase (753 aa).

5-methyltetrahydropteroyltri-L-glutamate is bound by residues 17 to 20 and K117; that span reads RELK. L-homocysteine contacts are provided by residues 431-433 and E484; that span reads IGS. L-methionine-binding positions include 431-433 and E484; that span reads IGS. Residues 515 to 516 and W561 contribute to the 5-methyltetrahydropteroyltri-L-glutamate site; that span reads RC. Residue D599 coordinates L-homocysteine. D599 contributes to the L-methionine binding site. E605 contacts 5-methyltetrahydropteroyltri-L-glutamate. Zn(2+) contacts are provided by H641, C643, and E665. The Proton donor role is filled by H694. C726 is a Zn(2+) binding site.

This sequence belongs to the vitamin-B12 independent methionine synthase family. Requires Zn(2+) as cofactor.

It carries out the reaction 5-methyltetrahydropteroyltri-L-glutamate + L-homocysteine = tetrahydropteroyltri-L-glutamate + L-methionine. It participates in amino-acid biosynthesis; L-methionine biosynthesis via de novo pathway; L-methionine from L-homocysteine (MetE route): step 1/1. Functionally, catalyzes the transfer of a methyl group from 5-methyltetrahydrofolate to homocysteine resulting in methionine formation. The protein is 5-methyltetrahydropteroyltriglutamate--homocysteine methyltransferase of Escherichia coli (strain ATCC 8739 / DSM 1576 / NBRC 3972 / NCIMB 8545 / WDCM 00012 / Crooks).